The primary structure comprises 173 residues: Peptide methionine sulfoxide reductase MsrA (173 aa).

The active site involves C10.

This sequence belongs to the MsrA Met sulfoxide reductase family.

It catalyses the reaction L-methionyl-[protein] + [thioredoxin]-disulfide + H2O = L-methionyl-(S)-S-oxide-[protein] + [thioredoxin]-dithiol. The enzyme catalyses [thioredoxin]-disulfide + L-methionine + H2O = L-methionine (S)-S-oxide + [thioredoxin]-dithiol. Its function is as follows. Has an important function as a repair enzyme for proteins that have been inactivated by oxidation. Catalyzes the reversible oxidation-reduction of methionine sulfoxide in proteins to methionine. The chain is Peptide methionine sulfoxide reductase MsrA from Psychrobacter arcticus (strain DSM 17307 / VKM B-2377 / 273-4).